We begin with the raw amino-acid sequence, 249 residues long: MTALKTTETIPLYTIRDLPIHGFRNMAQFVDYLFAGERVETGTLVAINAEKVLTAEKDVALRTLLDRAEYKYADGISIVRSIRRKYPQADVTRIAGADLWEALMERAGKEGTPVFLVGGKPDVLAQTEAKLRAQWNVNIVGSQDGYFAPEQRDALFERIRASGAQFVTVAMGSPRQEILMRDCRHHYPDALYMGVGGTYDVFTGHVKRAPLVWQNLGLEWLYRLLSQPSRIFRQFKLLKYVAYHYSGRL.

The protein belongs to the glycosyltransferase 26 family.

It catalyses the reaction UDP-N-acetyl-alpha-D-mannosaminouronate + N-acetyl-alpha-D-glucosaminyl-di-trans,octa-cis-undecaprenyl diphosphate = beta-D-ManNAcA-(1-&gt;4)-alpha-D-GlcNAc-di-trans,octa-cis-undecaprenyl diphosphate + UDP + H(+). Its pathway is bacterial outer membrane biogenesis; enterobacterial common antigen biosynthesis. Its function is as follows. Catalyzes the synthesis of Und-PP-GlcNAc-ManNAcA (Lipid II), the second lipid-linked intermediate involved in enterobacterial common antigen (ECA) synthesis. This Pectobacterium carotovorum subsp. carotovorum (strain PC1) protein is UDP-N-acetyl-D-mannosaminuronic acid transferase.